Consider the following 183-residue polypeptide: Ran guanine nucleotide release factor (183 aa).

An interaction with RAN region spans residues 23–66; the sequence is ELRQIPDNQEVFAHSQTDQSIIIELLEYQSQVQDADAARYHFED.

The protein belongs to the MOG1 family. Monomer. Interacts with ran.

It localises to the nucleus. The protein localises to the cytoplasm. The protein resides in the perinuclear region. Its subcellular location is the cell membrane. Functionally, may regulate the intracellular trafficking of RAN. Promotes guanine nucleotide release from RAN and inhibits binding of new GTP. Plays a role in the regulation of the levels of GTP-bound RAN in the nucleus. Required for normal expression of the ion channel hcn4 and for normal expression of the cardiac transcription factors nkx2.5, gata4 and hand2 during embryonic development. Required for normal embryonic heart development and normal heart rate. The protein is Ran guanine nucleotide release factor of Danio rerio (Zebrafish).